Here is a 254-residue protein sequence, read N- to C-terminus: MVNQKIQLICETESAVQFTALCQQKGLIHDPDSYLALVQTKVEGQVRLELRKLDEPKLGAVYVDFVTGTMAHRRKYGGGRGEAVAKAVGIKGNYLPTVIDATAGLGRDAFVLAALGCKVRLVERHPIVHLLLQDGLKRAYADVEIGTMMQANMQLLDIAHIQELNSSEEGADVVYLDPMYPHKQKSALVKKEMRIFQHLIGADLDADMLLEPALLLAQKRAVVKRPDYADFLAKKTPHFSHQTKNHRFDIYLKT.

Residues 107–108 (RD), 123–124 (ER), and Asp-177 contribute to the S-adenosyl-L-methionine site.

It belongs to the methyltransferase superfamily. RsmJ family.

The protein localises to the cytoplasm. It carries out the reaction guanosine(1516) in 16S rRNA + S-adenosyl-L-methionine = N(2)-methylguanosine(1516) in 16S rRNA + S-adenosyl-L-homocysteine + H(+). Specifically methylates the guanosine in position 1516 of 16S rRNA. This chain is Ribosomal RNA small subunit methyltransferase J, found in Histophilus somni (strain 129Pt) (Haemophilus somnus).